Consider the following 117-residue polypeptide: Ig heavy chain V region MOPC 104E (117 aa).

Positions 1–116 constitute an Ig-like domain; that stretch reads EVQLQQSGPE…WGAGTTVTVS (116 aa). Cys22 and Cys96 are disulfide-bonded. Asn55 carries N-linked (GlcNAc...) (high mannose) asparagine; atypical glycosylation.

This Mus musculus (Mouse) protein is Ig heavy chain V region MOPC 104E.